A 166-amino-acid chain; its full sequence is Large ribosomal subunit protein uL10 (166 aa).

It belongs to the universal ribosomal protein uL10 family. Part of the ribosomal stalk of the 50S ribosomal subunit. The N-terminus interacts with L11 and the large rRNA to form the base of the stalk. The C-terminus forms an elongated spine to which L12 dimers bind in a sequential fashion forming a multimeric L10(L12)X complex.

Forms part of the ribosomal stalk, playing a central role in the interaction of the ribosome with GTP-bound translation factors. In Enterococcus faecalis (strain ATCC 700802 / V583), this protein is Large ribosomal subunit protein uL10.